A 155-amino-acid chain; its full sequence is MDNLEYRSGVGIMLLNKDNLVFAACRNDMKEEAWQMPQGGLEAKETPEVGVLRELEEETGIPPRMVAIISHTKEWLTYDFPADLQASFFKNKYRGQRQLWFLARYLGRDEDININTDKPEFRAWKWVEPKQLPDLIVAFKKPLYEKILSEFSASL.

The region spanning Glu-5–Ser-149 is the Nudix hydrolase domain. The Nudix box signature appears at Gly-39 to Gly-60.

Belongs to the Nudix hydrolase family. RppH subfamily. It depends on a divalent metal cation as a cofactor.

In terms of biological role, accelerates the degradation of transcripts by removing pyrophosphate from the 5'-end of triphosphorylated RNA, leading to a more labile monophosphorylated state that can stimulate subsequent ribonuclease cleavage. This chain is RNA pyrophosphohydrolase, found in Zymomonas mobilis subsp. mobilis (strain ATCC 31821 / ZM4 / CP4).